A 345-amino-acid chain; its full sequence is Protein D345L (345 aa).

This sequence belongs to the asfivirus D345L family. Interacts with IKKA/CHUK and IKBKB.

It localises to the host cytoplasm. Plays a role in the negative regulation of host NF-kappa-B signaling pathway. Mechanistically, recruits host IKKA/CHUK and IKBKB to suppress their kinase activity towards NFKBIA. This chain is Protein D345L, found in African swine fever virus (strain Badajoz 1971 Vero-adapted) (Ba71V).